We begin with the raw amino-acid sequence, 380 residues long: Succinyl-diaminopimelate desuccinylase (380 aa).

A Zn(2+)-binding site is contributed by histidine 71. Aspartate 73 is an active-site residue. Aspartate 104 is a binding site for Zn(2+). Catalysis depends on glutamate 136, which acts as the Proton acceptor. Residues glutamate 137, glutamate 166, and histidine 351 each coordinate Zn(2+).

This sequence belongs to the peptidase M20A family. DapE subfamily. In terms of assembly, homodimer. Zn(2+) is required as a cofactor. Requires Co(2+) as cofactor.

The catalysed reaction is N-succinyl-(2S,6S)-2,6-diaminopimelate + H2O = (2S,6S)-2,6-diaminopimelate + succinate. Its pathway is amino-acid biosynthesis; L-lysine biosynthesis via DAP pathway; LL-2,6-diaminopimelate from (S)-tetrahydrodipicolinate (succinylase route): step 3/3. Its function is as follows. Catalyzes the hydrolysis of N-succinyl-L,L-diaminopimelic acid (SDAP), forming succinate and LL-2,6-diaminopimelate (DAP), an intermediate involved in the bacterial biosynthesis of lysine and meso-diaminopimelic acid, an essential component of bacterial cell walls. The chain is Succinyl-diaminopimelate desuccinylase from Ehrlichia canis (strain Jake).